The chain runs to 130 residues: Small ribosomal subunit protein uS11c (130 aa).

This sequence belongs to the universal ribosomal protein uS11 family. Part of the 30S ribosomal subunit.

Its subcellular location is the plastid. The protein localises to the chloroplast. This chain is Small ribosomal subunit protein uS11c, found in Tetradesmus obliquus (Green alga).